The chain runs to 610 residues: MKLLPKILAHSIDHNQHIEESRQLLSYALIHPATSLEDRSALAMWLNHLEDRTSTSFGSQNRGRSDSVDYGQTHYYHQRQNSEDKLNGWQNSRDSGICISASNWQDKSLGCENGHVPLYSSSSVPATINTIGTSTSTILSGQAHHSPLKRSVSLTPPMNVPNQPLGHGWMSHEDLRARGPQCLPSDHAPLSPQSSVASSGSGGSEHLEDQTTARNTFQEEGSGMKDVPAWLKSLRLHKYAALFSQMTYEEMMALTECQLEAQNVTKGARHKIVISIQKLKERQNLLKSLERDIIEGGSLRIPLQELHQMILTPIKAYSSPSTTPEVRRREPLLMESPSPDCKDSAATVTSATASASAGASGGLQPPQLSSCDGELAVAPLPEGDLPGQFTRVMGKVCTQLLVSRPDEENISSYLQLLDKCLVHEAFTETQKKRLLSWKQQVQKLFRSFPRKTLLDISGYRQQRNRGFGQSNSLPTASSVGSGMGRRNPRQYQIASRNVPSARLGLLGTSGFVSSNQRHTAANPTIMKQGRQNLWFANPGGSNSVPSRTHSSVQKTRSLPVHTSPQNMLMFQQPEFQLPVTEPDINNRLESLCLSMTEHALGDGVDRTSTI.

S67 bears the Phosphoserine mark. Disordered stretches follow at residues 177 to 222, 318 to 366, and 464 to 487; these read ARGP…EEGS, SSPS…LQPP, and NRGFGQSNSLPTASSVGSGMGRRN. The region spanning 222–295 is the SAM domain; it reads SGMKDVPAWL…LKSLERDIIE (74 aa). Phosphoserine is present on S319. A Phosphothreonine modification is found at T323. A compositionally biased stretch (low complexity) spans 344–358; that stretch reads SAATVTSATASASAG. R465 carries the omega-N-methylarginine modification. The span at 467–480 shows a compositional bias: polar residues; that stretch reads FGQSNSLPTASSVG. S472 is modified (phosphoserine).

It belongs to the SMAUG family. As to expression, expressed in brain (at protein level).

It localises to the cytoplasm. The protein resides in the cell projection. It is found in the dendrite. The protein localises to the synapse. Its subcellular location is the synaptosome. Acts as a translational repressor of SRE-containing messengers. The chain is Protein Smaug homolog 1 (Samd4a) from Rattus norvegicus (Rat).